The primary structure comprises 153 residues: IAA acetyltransferase (153 aa).

An N-acetyltransferase domain is found at 4–153 (VTIARESPLQ…PLSLFMEKPL (150 aa)).

Participates in the tryptophan-dependent indole-3-acetic acid production, which is a phytohormone released by A.brasilense. This Azospirillum brasilense protein is IAA acetyltransferase.